A 158-amino-acid polypeptide reads, in one-letter code: Protein Smg homolog (158 aa).

This sequence belongs to the Smg family.

The protein is Protein Smg homolog of Shewanella oneidensis (strain ATCC 700550 / JCM 31522 / CIP 106686 / LMG 19005 / NCIMB 14063 / MR-1).